We begin with the raw amino-acid sequence, 643 residues long: tRNA 5-methylaminomethyl-2-thiouridine biosynthesis bifunctional protein MnmC (643 aa).

The interval 1–223 (MPDRLVSATL…VDDRLVGDYA (223 aa)) is tRNA (mnm(5)s(2)U34)-methyltransferase. Positions 247–643 (IGAGLAGCAV…LRARRVGSAG (397 aa)) are FAD-dependent cmnm(5)s(2)U34 oxidoreductase.

The protein in the N-terminal section; belongs to the methyltransferase superfamily. tRNA (mnm(5)s(2)U34)-methyltransferase family. It in the C-terminal section; belongs to the DAO family. It depends on FAD as a cofactor.

The protein localises to the cytoplasm. The catalysed reaction is 5-aminomethyl-2-thiouridine(34) in tRNA + S-adenosyl-L-methionine = 5-methylaminomethyl-2-thiouridine(34) in tRNA + S-adenosyl-L-homocysteine + H(+). Functionally, catalyzes the last two steps in the biosynthesis of 5-methylaminomethyl-2-thiouridine (mnm(5)s(2)U) at the wobble position (U34) in tRNA. Catalyzes the FAD-dependent demodification of cmnm(5)s(2)U34 to nm(5)s(2)U34, followed by the transfer of a methyl group from S-adenosyl-L-methionine to nm(5)s(2)U34, to form mnm(5)s(2)U34. This is tRNA 5-methylaminomethyl-2-thiouridine biosynthesis bifunctional protein MnmC from Burkholderia cenocepacia (strain HI2424).